Consider the following 267-residue polypeptide: U6 snRNA phosphodiesterase 1 (267 aa).

Residues 1 to 13 are compositionally biased toward polar residues; sequence MSSAPLVGYSSSG. Positions 1–74 are disordered; the sequence is MSSAPLVGYS…DSAKHGGRIR (74 aa). Catalysis depends on His-122, which acts as the Proton acceptor. AMP is bound at residue 122 to 124; that stretch reads HVS. UMP is bound by residues Gln-166, Tyr-204, and 208–212; that span reads SFHIS. Residues Tyr-204 and 206 to 212 contribute to the AMP site; that span reads DPSFHIS. Residue His-210 is the Proton donor of the active site.

This sequence belongs to the 2H phosphoesterase superfamily. USB1 family. Interacts with PLRG1, CDC5L and PRPF19.

The protein localises to the nucleus. The enzyme catalyses a 3'-end uridylyl-uridine-RNA = a 3'-end 2',3'-cyclophospho-uridine-RNA + uridine. It catalyses the reaction a 3'-end uridylyl-adenosine-RNA = a 3'-end 2',3'-cyclophospho-uridine-RNA + adenosine. 3'-5' RNA exonuclease that trims the 3' end of oligo(U) and oligo(A) tracts of the pre-U6 small nuclear RNA (snRNA) molecule, leading to the formation of a mature U6 snRNA 3' end-terminated with a 2',3'-cyclic phosphate. Participates in the U6 snRNA 3' end processing that prevents U6 snRNA degradation. In addition also removes uridines from the 3' end of U6atac snRNA and possibly the vault RNA VTRNA1-1. This chain is U6 snRNA phosphodiesterase 1, found in Mus musculus (Mouse).